The chain runs to 139 residues: Large ribosomal subunit protein bL17 (139 aa).

The disordered stretch occupies residues 120–139; it reads ESAKGQDSGPVHVEGDEEAA.

This sequence belongs to the bacterial ribosomal protein bL17 family. Part of the 50S ribosomal subunit. Contacts protein L32.

The sequence is that of Large ribosomal subunit protein bL17 from Parvibaculum lavamentivorans (strain DS-1 / DSM 13023 / NCIMB 13966).